We begin with the raw amino-acid sequence, 63 residues long: Megourin-1 (63 aa).

In terms of assembly, monomer. In terms of processing, contains four disulfide bonds.

Its subcellular location is the secreted. Functionally, has antimicrobial activity against Gram-positive bacteria and fungi. The sequence is that of Megourin-1 from Megoura viciae (Vetch aphid).